The following is a 243-amino-acid chain: UPF0246 protein gbs2036 (243 aa).

Belongs to the UPF0246 family.

The polypeptide is UPF0246 protein gbs2036 (Streptococcus agalactiae serotype III (strain NEM316)).